A 1682-amino-acid chain; its full sequence is Cilia- and flagella-associated protein 43 (1682 aa).

6 WD repeats span residues 168-207, 262-305, 315-354, 358-397, 488-527, and 697-738; these read NPGM…QEHH, PKDD…VTVL, DGAP…YQVK, EFDG…PLDK, LSQS…SFQI, and SHQG…ANIA. Residues 767 to 790 form a disordered region; that stretch reads RESTNEQQEETTESQKHLNSDSSE. Coiled-coil stretches lie at residues 926–960 and 1171–1223; these read KERT…VEVQ and SEDE…HLKR.

Belongs to the CFAP43 family. Expressed in testis. Expressed in the lung, brain, oviduct and nasal cavity.

The protein resides in the cell projection. It localises to the cilium. Its subcellular location is the flagellum. The protein localises to the cytoplasm. It is found in the cytoskeleton. The protein resides in the flagellum axoneme. It localises to the cilium axoneme. Functionally, flagellar protein involved in sperm flagellum axoneme organization and function. Involved in the regulation of the beating frequency of motile cilia on the epithelial cells of the respiratory tract. This Mus musculus (Mouse) protein is Cilia- and flagella-associated protein 43.